Here is a 335-residue protein sequence, read N- to C-terminus: Tryptophan--tRNA ligase (335 aa).

ATP is bound by residues 9-11 (QST) and 17-18 (GN). The 'HIGH' region motif lies at 10 to 18 (STNSLTLGN). Asp-137 contributes to the L-tryptophan binding site. Residues 149–151 (GKD), Ile-189, and 198–202 (KMSKS) contribute to the ATP site. Residues 198–202 (KMSKS) carry the 'KMSKS' region motif.

This sequence belongs to the class-I aminoacyl-tRNA synthetase family. As to quaternary structure, homodimer.

It localises to the cytoplasm. The enzyme catalyses tRNA(Trp) + L-tryptophan + ATP = L-tryptophyl-tRNA(Trp) + AMP + diphosphate + H(+). Catalyzes the attachment of tryptophan to tRNA(Trp). This Malacoplasma penetrans (strain HF-2) (Mycoplasma penetrans) protein is Tryptophan--tRNA ligase.